Reading from the N-terminus, the 430-residue chain is Elongation factor Tu (430 aa).

The 208-residue stretch at R13 to E220 folds into the tr-type G domain. The tract at residues G22 to T29 is G1. G22–T29 serves as a coordination point for GTP. Position 29 (T29) interacts with Mg(2+). Residues G66 to S70 are G2. The segment at D87 to G90 is G3. GTP-binding positions include D87 to H91 and N142 to D145. The tract at residues N142 to D145 is G4. Positions S188–L190 are G5.

Belongs to the TRAFAC class translation factor GTPase superfamily. Classic translation factor GTPase family. EF-Tu/EF-1A subfamily. As to quaternary structure, monomer.

The protein localises to the cytoplasm. It catalyses the reaction GTP + H2O = GDP + phosphate + H(+). GTP hydrolase that promotes the GTP-dependent binding of aminoacyl-tRNA to the A-site of ribosomes during protein biosynthesis. The protein is Elongation factor Tu of Neorickettsia sennetsu (strain ATCC VR-367 / Miyayama) (Ehrlichia sennetsu).